Here is a 413-residue protein sequence, read N- to C-terminus: Snake venom metalloproteinase AaPA (413 aa).

Positions 1 to 20 are cleaved as a signal peptide; it reads MIQVLLVTICLAAFPYQGSS. The propeptide occupies 21–189; that stretch reads IILESGKVND…KKASQLIVST (169 aa). The Peptidase M12B domain maps to 193–390; that stretch reads RYMEIVIVVD…ENPPCILNKP (198 aa). Residues Glu-196 and Asp-280 each contribute to the Ca(2+) site. Cystine bridges form between Cys-304-Cys-385, Cys-344-Cys-369, and Cys-346-Cys-352. Zn(2+) is bound at residue His-329. Residue Glu-330 is part of the active site. Residues His-333 and His-339 each contribute to the Zn(2+) site. Residues Cys-385, Asn-388, Val-400, Asn-403, Leu-405, Glu-407, and Asp-413 each coordinate Ca(2+). Positions 391 to 413 are excised as a propeptide; the sequence is LRTDTVSTPVSGNELLEAEKDYD.

The protein belongs to the venom metalloproteinase (M12B) family. P-I subfamily. Monomer. It depends on Zn(2+) as a cofactor. Expressed by the venom gland.

The protein resides in the secreted. Snake venom zinc metalloprotease that may activate prothrombin. The polypeptide is Snake venom metalloproteinase AaPA (Deinagkistrodon acutus (Hundred-pace snake)).